Consider the following 385-residue polypeptide: Phospho-N-acetylmuramoyl-pentapeptide-transferase (385 aa).

The next 10 membrane-spanning stretches (helical) occupy residues 23–43 (FITV…LGAG), 79–99 (MGGI…GAVA), 103–123 (VWLS…DDYV), 135–155 (AWYK…VLYF), 186–206 (LGVD…VTAV), 218–238 (GLTT…VYVS), 258–278 (LTVF…YNGY), 282–302 (VFMG…TILM), 307–327 (LLLP…IVQT), and 362–382 (KIVT…LLIL).

It belongs to the glycosyltransferase 4 family. MraY subfamily. Requires Mg(2+) as cofactor.

The protein localises to the cell inner membrane. The catalysed reaction is UDP-N-acetyl-alpha-D-muramoyl-L-alanyl-gamma-D-glutamyl-meso-2,6-diaminopimeloyl-D-alanyl-D-alanine + di-trans,octa-cis-undecaprenyl phosphate = di-trans,octa-cis-undecaprenyl diphospho-N-acetyl-alpha-D-muramoyl-L-alanyl-D-glutamyl-meso-2,6-diaminopimeloyl-D-alanyl-D-alanine + UMP. The protein operates within cell wall biogenesis; peptidoglycan biosynthesis. Its function is as follows. Catalyzes the initial step of the lipid cycle reactions in the biosynthesis of the cell wall peptidoglycan: transfers peptidoglycan precursor phospho-MurNAc-pentapeptide from UDP-MurNAc-pentapeptide onto the lipid carrier undecaprenyl phosphate, yielding undecaprenyl-pyrophosphoryl-MurNAc-pentapeptide, known as lipid I. This chain is Phospho-N-acetylmuramoyl-pentapeptide-transferase, found in Salinibacter ruber (strain DSM 13855 / M31).